A 229-amino-acid polypeptide reads, in one-letter code: Putative N-acetylmannosamine-6-phosphate 2-epimerase (229 aa).

This sequence belongs to the NanE family.

It carries out the reaction an N-acyl-D-glucosamine 6-phosphate = an N-acyl-D-mannosamine 6-phosphate. Its pathway is amino-sugar metabolism; N-acetylneuraminate degradation; D-fructose 6-phosphate from N-acetylneuraminate: step 3/5. In terms of biological role, converts N-acetylmannosamine-6-phosphate (ManNAc-6-P) to N-acetylglucosamine-6-phosphate (GlcNAc-6-P). This Salmonella arizonae (strain ATCC BAA-731 / CDC346-86 / RSK2980) protein is Putative N-acetylmannosamine-6-phosphate 2-epimerase.